The sequence spans 889 residues: Potassium/sodium hyperpolarization-activated cyclic nucleotide-gated channel 2 (889 aa).

Over residues 1–10 (MDARGGGGRP) the composition is skewed to gly residues. Residues 1–159 (MDARGGGGRP…GPAGEPRGSQ (159 aa)) form a disordered region. The Cytoplasmic segment spans residues 1 to 215 (MDARGGGGRP…PYSDFRFYWD (215 aa)). Pro residues predominate over residues 17-55 (TPAPGPPPPPPPAPPQQQPPPPPPPAPPPGPGPAPPQHP). Residues 129–155 (GAASGPAPGPGPAEEAGSEEAGPAGEP) show a composition bias toward low complexity. Phosphoserine is present on residues Ser146 and Ser161. The tract at residues 158-209 (SQASFMQRQFGALLQPGVNKFSLRMFGSQKAVEREQERVKSAGAWIIHPYSD) is involved in subunit assembly. A helical transmembrane segment spans residues 216 to 236 (FTMLLFMVGNLIIIPVGITFF). Over 237-240 (KDET) the chain is Extracellular. A helical membrane pass occupies residues 241–261 (TAPWIVFNVVSDTFFLMDLVL). At 262–288 (NFRTGIVIEDNTEIILDPEKIKKKYLR) the chain is on the cytoplasmic side. The helical transmembrane segment at 289–309 (TWFVVDFVSSIPVDYIFLIVE) threads the bilayer. Residues 310 to 317 (KGIDSEVY) lie on the Extracellular side of the membrane. The helical; Voltage-sensor transmembrane segment at 318 to 338 (KTARALRIVRFTKILSLLRLL) threads the bilayer. Residues 339–369 (RLSRLIRYIHQWEEIFHMTYDLASAVMRICN) lie on the Cytoplasmic side of the membrane. A helical transmembrane segment spans residues 370–390 (LISMMLLLCHWDGCLQFLVPM). The Extracellular segment spans residues 391–413 (LQDFPRNCWVSINGMVNHSWSEL). An N-linked (GlcNAc...) asparagine glycan is attached at Asn407. The segment at residues 414-435 (YSFALFKAMSHMLCIGYGRQAP) is an intramembrane region (pore-forming). The Extracellular segment spans residues 436–440 (ESMTD). Residues 441–461 (IWLTMLSMIVGATCYAMFIGH) traverse the membrane as a helical segment. The Cytoplasmic segment spans residues 462–889 (ATALIQSLDS…SARSRLSSNL (428 aa)). 3',5'-cyclic AMP contacts are provided by Met599, Gly608, Glu609, Ile610, Cys611, Arg618, Thr619, and Arg659. Position 668 is a phosphoserine; by PKG/PRKG2 (Ser668). Ser754 is subject to Phosphoserine. A disordered region spans residues 754–889 (SPRLVRRPPP…SARSRLSSNL (136 aa)). Position 756 is an omega-N-methylarginine (Arg756). Residues 760 to 784 (RPPPGPAPAAASPGPPPPASPPGAP) are compositionally biased toward pro residues. Ser771, Ser779, Ser786, Ser866, and Ser868 each carry phosphoserine. Over residues 785 to 860 (ASPRAPRTSP…TPAARAAAPS (76 aa)) the composition is skewed to low complexity.

It belongs to the potassium channel HCN family. As to quaternary structure, homotetramer. The channel is composed of a homo- or heterotetrameric complex of pore-forming subunits. Heterotetramer with HCN1. Forms an obligate 4:4 complex with accessory subunit PEX5L. Interacts with KCNE2. In terms of processing, phosphorylation at Ser-668 by PRKG2 shifts the voltage-dependence to more negative voltages, hence counteracting the stimulatory effect of cGMP on gating. S-palmitoylated. Post-translationally, N-glycosylated; required for cell surface trafficking of HCN2. In terms of tissue distribution, highly expressed throughout the brain. Detected at low levels in heart.

It is found in the cell membrane. It catalyses the reaction Na(+)(in) = Na(+)(out). It carries out the reaction K(+)(in) = K(+)(out). The enzyme catalyses NH4(+)(in) = NH4(+)(out). Its activity is regulated as follows. Activated by cAMP, and at 10-100 times higher concentrations, also by cGMP. cAMP binding causes a conformation change that leads to the assembly of an active tetramer and channel opening. Binding of cAMP removes a tonic inhibition conferred by cyclic nucleotide-binding domain (CNBD) on channel opening. Channel activity is modulated by intracellular chloride ions and pH; acidic pH shifts the activation to more negative voltages. Inhibited by extracellular cesium ions. Functionally, hyperpolarization-activated ion channel that is permeable to sodium and potassium ions. Displays lower selectivity for K(+) over Na(+) ions. Contributes to the native pacemaker currents in heart (If) and in neurons (Ih). Can also transport ammonium in the distal nephron. Involved in the initiation of neuropathic pain in sensory neurons. The polypeptide is Potassium/sodium hyperpolarization-activated cyclic nucleotide-gated channel 2 (Homo sapiens (Human)).